We begin with the raw amino-acid sequence, 244 residues long: Heat stress transcription factor B-3 (244 aa).

A DNA-binding region spans residues 38–132; the sequence is PPPFLVKTYK…LMSNIRRRKS (95 aa). The hydrophobic repeat HR-A/B stretch occupies residues 173-218; that stretch reads TSSSFVYTALLDENKCLKNENELLSCELGKTKKKCKQLMELVERYR. Positions 202–208 match the Nuclear localization signal motif; the sequence is KTKKKCK. Residues 216-244 are disordered; that stretch reads RYRGEDEDATDESDDEEDEGLKLFGVKLE. Positions 220 to 234 are enriched in acidic residues; that stretch reads EDEDATDESDDEEDE. The short motif at 236 to 243 is the Nuclear export signal element; sequence LKLFGVKL.

The protein belongs to the HSF family. Class B subfamily. As to quaternary structure, homotrimer. Exhibits temperature-dependent phosphorylation.

The protein localises to the cytoplasm. The protein resides in the nucleus. Its function is as follows. Transcriptional regulator that specifically binds DNA sequence 5'-AGAAnnTTCT-3' known as heat shock promoter elements (HSE). The sequence is that of Heat stress transcription factor B-3 (HSFB3) from Arabidopsis thaliana (Mouse-ear cress).